The sequence spans 516 residues: Glucose-6-phosphate 1-dehydrogenase 5, cytoplasmic (516 aa).

Residues 38 to 45 (GASGDLAK), R73, Y156, and K183 each bind NADP(+). D-glucose 6-phosphate is bound by residues K183, 213–217 (HYLGK), E251, and D270. H275 functions as the Proton acceptor in the catalytic mechanism. Position 358 (K358) interacts with NADP(+). K361 and K366 together coordinate D-glucose 6-phosphate. NADP(+) is bound by residues K367, R371, and R395. Q397 serves as a coordination point for D-glucose 6-phosphate. Residues 403-405 (YMK), 423-425 (DLS), R489, and W511 each bind NADP(+).

The protein belongs to the glucose-6-phosphate dehydrogenase family. As to quaternary structure, forms homodimer. In terms of tissue distribution, expressed in leaves and stems.

The protein localises to the cytoplasm. Its subcellular location is the cytosol. The enzyme catalyses D-glucose 6-phosphate + NADP(+) = 6-phospho-D-glucono-1,5-lactone + NADPH + H(+). The protein operates within carbohydrate degradation; pentose phosphate pathway; D-ribulose 5-phosphate from D-glucose 6-phosphate (oxidative stage): step 1/3. Its activity is regulated as follows. Regulated by metabolites. Its function is as follows. Catalyzes the rate-limiting step of the oxidative pentose-phosphate pathway, which represents a route for the dissimilation of carbohydrates besides glycolysis. The main function of this enzyme is to provide reducing power (NADPH) and pentose phosphates for fatty acid and nucleic acid synthesis which are involved in membrane synthesis and cell division. This is Glucose-6-phosphate 1-dehydrogenase 5, cytoplasmic from Arabidopsis thaliana (Mouse-ear cress).